We begin with the raw amino-acid sequence, 423 residues long: Adenylosuccinate synthetase (423 aa).

GTP is bound by residues 12–18 (GDEGKGK) and 40–42 (GHT). Asp-13 acts as the Proton acceptor in catalysis. Mg(2+)-binding residues include Asp-13 and Gly-40. IMP is bound by residues 13–16 (DEGK), 38–41 (NAGH), Thr-129, Arg-143, Gln-224, Thr-239, and Arg-303. Catalysis depends on His-41, which acts as the Proton donor. 299–305 (SVTGRQR) provides a ligand contact to substrate. GTP contacts are provided by residues Arg-305, 331–333 (KGD), and 412–414 (SVG).

It belongs to the adenylosuccinate synthetase family. Homodimer. Mg(2+) serves as cofactor.

Its subcellular location is the cytoplasm. It carries out the reaction IMP + L-aspartate + GTP = N(6)-(1,2-dicarboxyethyl)-AMP + GDP + phosphate + 2 H(+). It functions in the pathway purine metabolism; AMP biosynthesis via de novo pathway; AMP from IMP: step 1/2. In terms of biological role, plays an important role in the de novo pathway of purine nucleotide biosynthesis. Catalyzes the first committed step in the biosynthesis of AMP from IMP. The protein is Adenylosuccinate synthetase of Flavobacterium psychrophilum (strain ATCC 49511 / DSM 21280 / CIP 103535 / JIP02/86).